The following is a 391-amino-acid chain: Lipoyl synthase, mitochondrial (391 aa).

The transit peptide at 1–44 (MVHPHLSRTKRTFFSHSSQMISRHIRKTNSLAFVRALSASETAV) directs the protein to the mitochondrion. Positions 120, 125, 131, 150, 154, 157, and 365 each coordinate [4Fe-4S] cluster. In terms of domain architecture, Radical SAM core spans 135–354 (KKSEATATIM…KEVALEMGFL (220 aa)).

This sequence belongs to the radical SAM superfamily. Lipoyl synthase family. [4Fe-4S] cluster is required as a cofactor.

Its subcellular location is the mitochondrion. It catalyses the reaction [[Fe-S] cluster scaffold protein carrying a second [4Fe-4S](2+) cluster] + N(6)-octanoyl-L-lysyl-[protein] + 2 oxidized [2Fe-2S]-[ferredoxin] + 2 S-adenosyl-L-methionine + 4 H(+) = [[Fe-S] cluster scaffold protein] + N(6)-[(R)-dihydrolipoyl]-L-lysyl-[protein] + 4 Fe(3+) + 2 hydrogen sulfide + 2 5'-deoxyadenosine + 2 L-methionine + 2 reduced [2Fe-2S]-[ferredoxin]. It participates in protein modification; protein lipoylation via endogenous pathway; protein N(6)-(lipoyl)lysine from octanoyl-[acyl-carrier-protein]: step 2/2. Its function is as follows. Catalyzes the radical-mediated insertion of two sulfur atoms into the C-6 and C-8 positions of the octanoyl moiety bound to the lipoyl domains of lipoate-dependent enzymes, thereby converting the octanoylated domains into lipoylated derivatives. This Clavispora lusitaniae (strain ATCC 42720) (Yeast) protein is Lipoyl synthase, mitochondrial.